A 416-amino-acid polypeptide reads, in one-letter code: Polyadenylation and cleavage factor homolog 1 (416 aa).

Polar residues predominate over residues 1 to 17 (MASNGSFSAQRNANART). Residues 1 to 80 (MASNGSFSAQ…NNNNVSRVSS (80 aa)) form a disordered region. Residues 70–80 (SNNNNVSRVSS) show a composition bias toward low complexity. Residues 199–220 (KELTDLLSLLNNEKEKKTLEAS) are a coiled coil. The segment at 254–276 (RQCSSCGLRFKCQEEHSKHMDWH) adopts a C2H2-type zinc-finger fold.

As to quaternary structure, forms a complex with cleavage and polyadenylation specificity factor (CPSF) subunits CLPS3, CLPS5, CPSF30, PCFS4, PCFS5, CSTF77 and FIPS3.

The protein localises to the nucleus. This chain is Polyadenylation and cleavage factor homolog 1, found in Arabidopsis thaliana (Mouse-ear cress).